Consider the following 65-residue polypeptide: Large ribosomal subunit protein bL35 (65 aa).

This sequence belongs to the bacterial ribosomal protein bL35 family.

This Buchnera aphidicola subsp. Acyrthosiphon pisum (strain 5A) protein is Large ribosomal subunit protein bL35.